The chain runs to 274 residues: tRNA-cytidine(32) 2-sulfurtransferase (274 aa).

Positions 40 to 45 (SGGKDS) match the PP-loop motif motif. [4Fe-4S] cluster-binding residues include Cys-115, Cys-118, and Cys-206.

The protein belongs to the TtcA family. In terms of assembly, homodimer. Mg(2+) serves as cofactor. The cofactor is [4Fe-4S] cluster.

The protein resides in the cytoplasm. The enzyme catalyses cytidine(32) in tRNA + S-sulfanyl-L-cysteinyl-[cysteine desulfurase] + AH2 + ATP = 2-thiocytidine(32) in tRNA + L-cysteinyl-[cysteine desulfurase] + A + AMP + diphosphate + H(+). It participates in tRNA modification. In terms of biological role, catalyzes the ATP-dependent 2-thiolation of cytidine in position 32 of tRNA, to form 2-thiocytidine (s(2)C32). The sulfur atoms are provided by the cysteine/cysteine desulfurase (IscS) system. In Pseudomonas aeruginosa (strain LESB58), this protein is tRNA-cytidine(32) 2-sulfurtransferase.